Reading from the N-terminus, the 322-residue chain is ATP-dependent 6-phosphofructokinase (322 aa).

Gly11 contributes to the ATP binding site. Arg21–Arg25 provides a ligand contact to ADP. Residues Arg72–Cys73 and Gly102–Ser105 contribute to the ATP site. Asp103 is a binding site for Mg(2+). Residue Thr127 to Asp129 participates in substrate binding. The active-site Proton acceptor is the Asp129. Residue Arg156 participates in ADP binding. Substrate contacts are provided by residues Arg164 and Met171–Arg173. ADP-binding positions include Gly187 to Glu189, Arg213, and Lys215 to His217. Substrate-binding positions include Glu224, Arg245, and His251 to Arg254.

Belongs to the phosphofructokinase type A (PFKA) family. ATP-dependent PFK group I subfamily. Prokaryotic clade 'B1' sub-subfamily. As to quaternary structure, homotetramer. It depends on Mg(2+) as a cofactor.

The protein resides in the cytoplasm. It carries out the reaction beta-D-fructose 6-phosphate + ATP = beta-D-fructose 1,6-bisphosphate + ADP + H(+). The protein operates within carbohydrate degradation; glycolysis; D-glyceraldehyde 3-phosphate and glycerone phosphate from D-glucose: step 3/4. Allosterically activated by ADP and other diphosphonucleosides, and allosterically inhibited by phosphoenolpyruvate. Catalyzes the phosphorylation of D-fructose 6-phosphate to fructose 1,6-bisphosphate by ATP, the first committing step of glycolysis. This chain is ATP-dependent 6-phosphofructokinase, found in Staphylococcus carnosus (strain TM300).